The primary structure comprises 131 residues: Large ribosomal subunit protein bL17 (131 aa).

Belongs to the bacterial ribosomal protein bL17 family. As to quaternary structure, part of the 50S ribosomal subunit. Contacts protein L32.

This chain is Large ribosomal subunit protein bL17, found in Sodalis glossinidius (strain morsitans).